We begin with the raw amino-acid sequence, 258 residues long: Regulatory protein RecX (258 aa).

The protein belongs to the RecX family.

It localises to the cytoplasm. Its function is as follows. Modulates RecA activity. The protein is Regulatory protein RecX of Streptococcus sanguinis (strain SK36).